Here is a 446-residue protein sequence, read N- to C-terminus: MTEQKRKLEKLTGVKGMNDILPQDAGLWEFFEATVKSLLRAYGYQNIRTPIVEHTQLFTRGIGEVTDIVEKEMYSFVDALNGENLTLRPENTAAVVRAAIEHNMLYDGPKRLWYLGPMFRHERPQRGRYRQFHQVGVEALGFAGPDADAEIIMMCQRLWDDLGLTGIKLEINSLGLAEERAAHRVELIKYLEQHVDKLDDDAQRRLYTNPLRVLDTKNPALQEIVRNAPQLIDFLGDVSRAHFDGLQRLLKANNLPFTINPRLVRGLDYYNLTVFEWVTDKLGAQGTVAAGGRYDPLIEQLGGKPTAACGWAMGVERILELLKEEHLVPEQEGVDVYVVHQGDAAREQAFIVAERLRDTGLDVILHCSADGAGASFKSQMKRADASGAAFAVIFGEDEVANGTVSVKPLRGTGAEGEKNVQQSVPVESLTEFLINAMVATAEDGDD.

It belongs to the class-II aminoacyl-tRNA synthetase family. As to quaternary structure, homodimer.

It localises to the cytoplasm. It carries out the reaction tRNA(His) + L-histidine + ATP = L-histidyl-tRNA(His) + AMP + diphosphate + H(+). The polypeptide is Histidine--tRNA ligase (Burkholderia pseudomallei (strain K96243)).